We begin with the raw amino-acid sequence, 89 residues long: Small ribosomal subunit protein uS15 (89 aa).

It belongs to the universal ribosomal protein uS15 family. Part of the 30S ribosomal subunit. Forms a bridge to the 50S subunit in the 70S ribosome, contacting the 23S rRNA.

Functionally, one of the primary rRNA binding proteins, it binds directly to 16S rRNA where it helps nucleate assembly of the platform of the 30S subunit by binding and bridging several RNA helices of the 16S rRNA. In terms of biological role, forms an intersubunit bridge (bridge B4) with the 23S rRNA of the 50S subunit in the ribosome. The protein is Small ribosomal subunit protein uS15 of Streptococcus thermophilus (strain CNRZ 1066).